Consider the following 72-residue polypeptide: UPF0352 protein Patl_3379 (72 aa).

It belongs to the UPF0352 family.

This Pseudoalteromonas atlantica (strain T6c / ATCC BAA-1087) protein is UPF0352 protein Patl_3379.